A 270-amino-acid chain; its full sequence is uncharacterized protein (270 aa).

10 helical membrane passes run 12–32 (AAIVLSAVLMGTVSVFVRNVG), 35–55 (TLSVTFLRLFFGFLAVLPFCL), 64–84 (TLLGLAVFNFLTVASYIAAIQ), 88–108 (VAMAALLLYMAPVYVIPLSVL), 117–137 (TLLALPLGLIGLYLMLTPYAE), 138–158 (LTFGIIFGIVSGLSYAIVFVL), 171–191 (ITFYNLGLGSAALLPYFLMFG), 194–214 (GSWLWAIGLGVVPTAVPFVLF), 226–246 (APILALIEPLCAGLVGYFYFG), and 248–268 (TLTLTQLIGGAMILAGVLIAW). 2 consecutive EamA domains span residues 19–133 (VLMG…LMLT) and 150–269 (LSYA…IAWR).

It belongs to the EamA transporter family.

The protein resides in the cell membrane. This is an uncharacterized protein from Archaeoglobus fulgidus (strain ATCC 49558 / DSM 4304 / JCM 9628 / NBRC 100126 / VC-16).